We begin with the raw amino-acid sequence, 241 residues long: Anthocyanidin 3-O-glucosyltransferase 4 (241 aa).

6 residues coordinate UDP-alpha-D-glucose: Gln-104, His-119, Trp-122, Asn-123, Ser-124, and Glu-127. An an anthocyanidin-binding site is contributed by Ala-142. UDP-alpha-D-glucose-binding residues include Glu-143 and Gln-144.

It belongs to the UDP-glycosyltransferase family. In terms of tissue distribution, faintly expressed in cotyledons, roots and leaves.

The enzyme catalyses an anthocyanidin + UDP-alpha-D-glucose + H(+) = an anthocyanidin 3-O-beta-D-glucoside + UDP. It functions in the pathway pigment biosynthesis; anthocyanin biosynthesis. Its function is as follows. In the presence of other necessary color factors, this glycosylation reaction allows the accumulation of anthocyanin pigments. This chain is Anthocyanidin 3-O-glucosyltransferase 4 (GT4), found in Manihot esculenta (Cassava).